The sequence spans 147 residues: Large ribosomal subunit protein uL15 (147 aa).

Residues 20–54 form a disordered region; that stretch reads GRGIGSGKGKTSGKGHKGQKARGTGKVHPWFEGGQ. Residues 30–44 are compositionally biased toward basic residues; the sequence is TSGKGHKGQKARGTG.

This sequence belongs to the universal ribosomal protein uL15 family. In terms of assembly, part of the 50S ribosomal subunit.

In terms of biological role, binds to the 23S rRNA. This is Large ribosomal subunit protein uL15 from Thermosipho africanus (strain TCF52B).